The following is a 142-amino-acid chain: Large ribosomal subunit protein uL13 (142 aa).

Belongs to the universal ribosomal protein uL13 family. Part of the 50S ribosomal subunit.

In terms of biological role, this protein is one of the early assembly proteins of the 50S ribosomal subunit, although it is not seen to bind rRNA by itself. It is important during the early stages of 50S assembly. This is Large ribosomal subunit protein uL13 from Azotobacter vinelandii (strain DJ / ATCC BAA-1303).